A 232-amino-acid polypeptide reads, in one-letter code: 2,3,4,5-tetrahydropyridine-2,6-dicarboxylate N-acetyltransferase (232 aa).

This sequence belongs to the transferase hexapeptide repeat family. DapH subfamily.

It catalyses the reaction (S)-2,3,4,5-tetrahydrodipicolinate + acetyl-CoA + H2O = L-2-acetamido-6-oxoheptanedioate + CoA. It participates in amino-acid biosynthesis; L-lysine biosynthesis via DAP pathway; LL-2,6-diaminopimelate from (S)-tetrahydrodipicolinate (acetylase route): step 1/3. In terms of biological role, catalyzes the transfer of an acetyl group from acetyl-CoA to tetrahydrodipicolinate. The chain is 2,3,4,5-tetrahydropyridine-2,6-dicarboxylate N-acetyltransferase from Streptococcus uberis (strain ATCC BAA-854 / 0140J).